Here is a 267-residue protein sequence, read N- to C-terminus: L-aspartate dehydrogenase 2 (267 aa).

Residues alanine 123 and asparagine 189 each coordinate NAD(+). Histidine 219 is an active-site residue.

It belongs to the L-aspartate dehydrogenase family.

The enzyme catalyses L-aspartate + NADP(+) + H2O = oxaloacetate + NH4(+) + NADPH + H(+). The catalysed reaction is L-aspartate + NAD(+) + H2O = oxaloacetate + NH4(+) + NADH + H(+). Its pathway is cofactor biosynthesis; NAD(+) biosynthesis; iminoaspartate from L-aspartate (dehydrogenase route): step 1/1. In terms of biological role, specifically catalyzes the NAD or NADP-dependent dehydrogenation of L-aspartate to iminoaspartate. The polypeptide is L-aspartate dehydrogenase 2 (Bordetella pertussis (strain Tohama I / ATCC BAA-589 / NCTC 13251)).